Reading from the N-terminus, the 390-residue chain is 4-hydroxy-3-methylbut-2-en-1-yl diphosphate synthase (flavodoxin) (390 aa).

Residues Cys-281, Cys-284, Cys-316, and Glu-323 each contribute to the [4Fe-4S] cluster site.

This sequence belongs to the IspG family. The cofactor is [4Fe-4S] cluster.

It catalyses the reaction (2E)-4-hydroxy-3-methylbut-2-enyl diphosphate + oxidized [flavodoxin] + H2O + 2 H(+) = 2-C-methyl-D-erythritol 2,4-cyclic diphosphate + reduced [flavodoxin]. Its pathway is isoprenoid biosynthesis; isopentenyl diphosphate biosynthesis via DXP pathway; isopentenyl diphosphate from 1-deoxy-D-xylulose 5-phosphate: step 5/6. Functionally, converts 2C-methyl-D-erythritol 2,4-cyclodiphosphate (ME-2,4cPP) into 1-hydroxy-2-methyl-2-(E)-butenyl 4-diphosphate. In Salinispora tropica (strain ATCC BAA-916 / DSM 44818 / JCM 13857 / NBRC 105044 / CNB-440), this protein is 4-hydroxy-3-methylbut-2-en-1-yl diphosphate synthase (flavodoxin).